A 442-amino-acid polypeptide reads, in one-letter code: Glutamyl-tRNA reductase (442 aa).

Residues 49 to 52 (TCNR), Ser-109, 114 to 116 (EGQ), and Gln-120 each bind substrate. Cys-50 functions as the Nucleophile in the catalytic mechanism. 198 to 203 (GAGRMA) contributes to the NADP(+) binding site. The segment at 420–442 (MAAAQRLFDLPGDDADRDRSDAK) is disordered. The segment covering 433–442 (DADRDRSDAK) has biased composition (basic and acidic residues).

It belongs to the glutamyl-tRNA reductase family. As to quaternary structure, homodimer.

The enzyme catalyses (S)-4-amino-5-oxopentanoate + tRNA(Glu) + NADP(+) = L-glutamyl-tRNA(Glu) + NADPH + H(+). It functions in the pathway porphyrin-containing compound metabolism; protoporphyrin-IX biosynthesis; 5-aminolevulinate from L-glutamyl-tRNA(Glu): step 1/2. It participates in porphyrin-containing compound metabolism; chlorophyll biosynthesis. Its function is as follows. Catalyzes the NADPH-dependent reduction of glutamyl-tRNA(Glu) to glutamate 1-semialdehyde (GSA). This is Glutamyl-tRNA reductase from Synechococcus sp. (strain RCC307).